A 412-amino-acid polypeptide reads, in one-letter code: Peptidase T (412 aa).

Residue histidine 79 participates in Zn(2+) binding. Aspartate 81 is a catalytic residue. Aspartate 142 serves as a coordination point for Zn(2+). Glutamate 176 (proton acceptor) is an active-site residue. Residues glutamate 177, aspartate 199, and histidine 381 each contribute to the Zn(2+) site.

Belongs to the peptidase M20B family. It depends on Zn(2+) as a cofactor.

It is found in the cytoplasm. It catalyses the reaction Release of the N-terminal residue from a tripeptide.. Functionally, cleaves the N-terminal amino acid of tripeptides. This Exiguobacterium sp. (strain ATCC BAA-1283 / AT1b) protein is Peptidase T.